A 156-amino-acid chain; its full sequence is MPRRRVVGQRKILPDPKFNSELLAKFINVIMQDGKKSVAEKIIYKALDVVAEKKGEDHLVVLEAALDNVRPSVEVKSRRVGGSTYQVPCEVRPVRRNALAMRWLVEAARKRGEKSMALRLAGEMLDASDNKGTAVKKREDVHRMAEANKAFAHYRW.

The protein belongs to the universal ribosomal protein uS7 family. As to quaternary structure, part of the 30S ribosomal subunit. Contacts proteins S9 and S11.

Its function is as follows. One of the primary rRNA binding proteins, it binds directly to 16S rRNA where it nucleates assembly of the head domain of the 30S subunit. Is located at the subunit interface close to the decoding center, probably blocks exit of the E-site tRNA. In Shewanella amazonensis (strain ATCC BAA-1098 / SB2B), this protein is Small ribosomal subunit protein uS7.